Reading from the N-terminus, the 21-residue chain is Chlorophyllase type 2 (21 aa).

The protein belongs to the AB hydrolase superfamily. Lipase family.

The catalysed reaction is a chlorophyll + H2O = a chlorophyllide + phytol + H(+). The protein operates within porphyrin-containing compound metabolism; chlorophyll degradation. In terms of biological role, catalyzes the hydrolysis of ester bond in chlorophyll to yield chlorophyllide and phytol. The protein is Chlorophyllase type 2 of Chenopodium album (Fat hen).